The following is a 98-amino-acid chain: Small ribosomal subunit protein eS24 (98 aa).

The protein belongs to the eukaryotic ribosomal protein eS24 family. As to quaternary structure, part of the 30S ribosomal subunit.

The sequence is that of Small ribosomal subunit protein eS24 from Thermococcus kodakarensis (strain ATCC BAA-918 / JCM 12380 / KOD1) (Pyrococcus kodakaraensis (strain KOD1)).